Here is a 466-residue protein sequence, read N- to C-terminus: ATP synthase subunit beta (466 aa).

155–162 lines the ATP pocket; that stretch reads GGAGVGKT.

It belongs to the ATPase alpha/beta chains family. F-type ATPases have 2 components, CF(1) - the catalytic core - and CF(0) - the membrane proton channel. CF(1) has five subunits: alpha(3), beta(3), gamma(1), delta(1), epsilon(1). CF(0) has three main subunits: a(1), b(2) and c(9-12). The alpha and beta chains form an alternating ring which encloses part of the gamma chain. CF(1) is attached to CF(0) by a central stalk formed by the gamma and epsilon chains, while a peripheral stalk is formed by the delta and b chains.

Its subcellular location is the cell inner membrane. It carries out the reaction ATP + H2O + 4 H(+)(in) = ADP + phosphate + 5 H(+)(out). In terms of biological role, produces ATP from ADP in the presence of a proton gradient across the membrane. The catalytic sites are hosted primarily by the beta subunits. This is ATP synthase subunit beta from Bordetella petrii (strain ATCC BAA-461 / DSM 12804 / CCUG 43448).